A 298-amino-acid chain; its full sequence is Inosose dehydratase 1 (298 aa).

This sequence belongs to the IolE/MocC family. Glutathione is required as a cofactor. The cofactor is Co(2+). Requires Mn(2+) as cofactor.

The enzyme catalyses scyllo-inosose = 3D-3,5/4-trihydroxycyclohexane-1,2-dione + H2O. It functions in the pathway polyol metabolism; myo-inositol degradation into acetyl-CoA; acetyl-CoA from myo-inositol: step 2/7. Functionally, catalyzes the dehydration of inosose (2-keto-myo-inositol, 2KMI or 2,4,6/3,5-pentahydroxycyclohexanone) to 3D-(3,5/4)-trihydroxycyclohexane-1,2-dione (D-2,3-diketo-4-deoxy-epi-inositol). This chain is Inosose dehydratase 1, found in Bacillus cereus (strain ZK / E33L).